The following is a 423-amino-acid chain: Lysosomal acid phosphatase (423 aa).

A signal peptide spans 1 to 30; it reads MAGKRSGWSRAALLQLLLGVNLVVMPPTRA. The Lumenal portion of the chain corresponds to 31–380; sequence RSLRFVTLLY…QLASGPADTE (350 aa). Residue histidine 42 is the Nucleophile of the active site. N-linked (GlcNAc...) asparagine glycans are attached at residues asparagine 92, asparagine 133, asparagine 167, asparagine 177, asparagine 191, and asparagine 267. Disulfide bonds link cysteine 159-cysteine 370, cysteine 212-cysteine 310, and cysteine 345-cysteine 349. The active-site Proton donor is aspartate 287. N-linked (GlcNAc...) asparagine glycosylation is found at asparagine 322 and asparagine 331. A helical transmembrane segment spans residues 381–401; the sequence is VIVALAVCGSILFLLIVLLLT. At 402-423 the chain is on the cytoplasmic side; the sequence is VLFRMQAQPPGYRHVADGEDHA.

The protein belongs to the histidine acid phosphatase family. In terms of processing, the membrane-bound form is converted to the soluble form by sequential proteolytic processing. First, the C-terminal cytoplasmic tail is removed. Cleavage by a lysosomal protease releases the soluble form in the lysosome lumen. Post-translationally, N-glycosylated. The intermediates formed during enzymatic deglycosylation suggest that all eight predicted N-glycosylation sites are used.

The protein localises to the lysosome membrane. It localises to the lysosome lumen. The enzyme catalyses a phosphate monoester + H2O = an alcohol + phosphate. The polypeptide is Lysosomal acid phosphatase (ACP2) (Homo sapiens (Human)).